We begin with the raw amino-acid sequence, 413 residues long: MSTDPTSKPAFPITDEVRHALAVTKRGVDELLIEEEFAQKLAKSAATDKPLRIKLGLDPTAPDIHLGHTVVLNKMRQLQDLGHTVIFLIGDFTSLIGDPSGRNATRPPLTREQIESNAKTYFEQAALVLDREKTEIRYNSEWSMPLGADGMIKLASRYTVARMLEREDFTKRFQGGIPISIHEFLYPLMQGYDSVALNADLELGGTDQKFNLLVGRELQKQYGQEQQCILTMPLLEGLDGVEKMSKSKGNYVGISEKPTDMFGKLMSISDVLMWRYFELLSFRSLDEIARFRGEAEGGRNPRDFKVMLAQEIVARFHSQADAERALEDFNHRAKGGVPDDIPAVTLAGAPLAIGQLLKQAGLVPSTSEALRNIEQGGVKIDGATVSDKALKVDAGEFVVQVGKRRFARVTLTA.

A 'HIGH' region motif is present at residues 59-68 (PTAPDIHLGH). A 'KMSKS' region motif is present at residues 243–247 (KMSKS). Lys-246 lines the ATP pocket. Residues 351–411 (LAIGQLLKQA…GKRRFARVTL (61 aa)) form the S4 RNA-binding domain.

The protein belongs to the class-I aminoacyl-tRNA synthetase family. TyrS type 2 subfamily. Homodimer.

It is found in the cytoplasm. The catalysed reaction is tRNA(Tyr) + L-tyrosine + ATP = L-tyrosyl-tRNA(Tyr) + AMP + diphosphate + H(+). In terms of biological role, catalyzes the attachment of tyrosine to tRNA(Tyr) in a two-step reaction: tyrosine is first activated by ATP to form Tyr-AMP and then transferred to the acceptor end of tRNA(Tyr). This is Tyrosine--tRNA ligase from Burkholderia pseudomallei (strain K96243).